We begin with the raw amino-acid sequence, 410 residues long: Imidazolonepropionase (410 aa).

2 residues coordinate Fe(3+): His73 and His75. Positions 73 and 75 each coordinate Zn(2+). 4-imidazolone-5-propanoate contacts are provided by Arg82, Tyr145, and His178. Tyr145 provides a ligand contact to N-formimidoyl-L-glutamate. Position 243 (His243) interacts with Fe(3+). His243 provides a ligand contact to Zn(2+). Gln246 lines the 4-imidazolone-5-propanoate pocket. Residue Asp318 coordinates Fe(3+). Asp318 contacts Zn(2+). 2 residues coordinate N-formimidoyl-L-glutamate: Asn320 and Gly322. Ser323 contributes to the 4-imidazolone-5-propanoate binding site.

It belongs to the metallo-dependent hydrolases superfamily. HutI family. Requires Zn(2+) as cofactor. Fe(3+) is required as a cofactor.

It is found in the cytoplasm. The enzyme catalyses 4-imidazolone-5-propanoate + H2O = N-formimidoyl-L-glutamate. It participates in amino-acid degradation; L-histidine degradation into L-glutamate; N-formimidoyl-L-glutamate from L-histidine: step 3/3. Functionally, catalyzes the hydrolytic cleavage of the carbon-nitrogen bond in imidazolone-5-propanoate to yield N-formimidoyl-L-glutamate. It is the third step in the universal histidine degradation pathway. In Shewanella baltica (strain OS223), this protein is Imidazolonepropionase.